We begin with the raw amino-acid sequence, 119 residues long: Immunoglobulin heavy variable 2-70 (119 aa).

An N-terminal signal peptide occupies residues 1–19; it reads MDILCSTLLLLTVPSWVLS. Residue Q20 is modified to Pyrrolidone carboxylic acid. Positions 20-44 are framework-1; that stretch reads QVTLRESGPALVKPTQTLTLTCTFS. Residues 20 to 119 form the Ig-like domain; the sequence is QVTLRESGPA…DTATYYCARI (100 aa). A disulfide bond links C41 and C116. Positions 45–54 are complementarity-determining-1; that stretch reads GFSLSTSGMC. A framework-2 region spans residues 55-71; that stretch reads VSWIRQPPGKALEWLAL. A complementarity-determining-2 region spans residues 72-78; it reads IDWDDDK. Residues 79–116 are framework-3; sequence YYSTSLKTRLTISKDTSKNQVVLTMTNMDPVDTATYYC. A complementarity-determining-3 region spans residues 117 to 119; sequence ARI.

Immunoglobulins are composed of two identical heavy chains and two identical light chains; disulfide-linked.

Its subcellular location is the secreted. The protein resides in the cell membrane. In terms of biological role, v region of the variable domain of immunoglobulin heavy chains that participates in the antigen recognition. Immunoglobulins, also known as antibodies, are membrane-bound or secreted glycoproteins produced by B lymphocytes. In the recognition phase of humoral immunity, the membrane-bound immunoglobulins serve as receptors which, upon binding of a specific antigen, trigger the clonal expansion and differentiation of B lymphocytes into immunoglobulins-secreting plasma cells. Secreted immunoglobulins mediate the effector phase of humoral immunity, which results in the elimination of bound antigens. The antigen binding site is formed by the variable domain of one heavy chain, together with that of its associated light chain. Thus, each immunoglobulin has two antigen binding sites with remarkable affinity for a particular antigen. The variable domains are assembled by a process called V-(D)-J rearrangement and can then be subjected to somatic hypermutations which, after exposure to antigen and selection, allow affinity maturation for a particular antigen. The protein is Immunoglobulin heavy variable 2-70 of Homo sapiens (Human).